Reading from the N-terminus, the 242-residue chain is B-box zinc finger protein 20 (242 aa).

Zn(2+) contacts are provided by Cys-5, Cys-8, Cys-28, His-33, Cys-58, Cys-61, Cys-81, and His-91. The B box-type 1; atypical zinc-finger motif lies at 5–47 (CAVCDKEEASVFCCADEAALCNGCDRHVHFANKLAGKHLRFSL). The B box-type 2; atypical zinc-finger motif lies at 58 to 100 (CDICGERRALLFCQEDRAILCRECDIPIHQANEHTKKHNRFLL). Residues 112-153 (YPRASNSNSAAAFGRAKTRPKSVSSEVPSSASNEVFTSSSST) are disordered. Residues 133–153 (SVSSEVPSSASNEVFTSSSST) are compositionally biased toward low complexity.

Interacts with MED25 and COP1. COP1-mediated ubiquitination and subsequent proteasomal degradation of BBX20 occurs in the dark.

The protein resides in the nucleus. Functionally, acts as a positive regulator of seedling photomorphogenesis. Plays a negative role in brassinosteroid responses. The sequence is that of B-box zinc finger protein 20 from Arabidopsis thaliana (Mouse-ear cress).